A 199-amino-acid polypeptide reads, in one-letter code: MCRTIATFPNTCLERAKEFKTRLGIFLHKSELSSDTGGNGKFEWASKLSKERSFSEDVLGWRESFQSLLNSKNGVAAFHAFLKTEFSEENLEFWLACEEFKKIRSATKLASRAHHIFDEYIRSEAPKEVNIDHETRELTKTNLQAATTSCFDVAQGKTRTLMEKDSYPRFLKSPAYRDLAAQASATSASGSSPAEPSHT.

2 S-palmitoyl cysteine lipidation sites follow: Cys-2 and Cys-12. The RGS domain maps to 64–180 (SFQSLLNSKN…LKSPAYRDLA (117 aa)). Tyr-167 and Tyr-176 each carry phosphotyrosine.

As to quaternary structure, interacts with GNAI1 and GNAQ. Interacts with GNAI3, GNAI3 and GNAO1. Palmitoylated on Cys-2 and/or Cys-12. In terms of processing, phosphorylated. Phosphorylation at Tyr-167 by EGFR enhances GTPase accelerating (GAP) activity toward GNAI1. In terms of tissue distribution, predominantly found in the retina. Some expression has been found in the liver.

It is found in the membrane. Its function is as follows. Regulates G protein-coupled receptor signaling cascades. Inhibits signal transduction by increasing the GTPase activity of G protein alpha subunits, thereby driving them into their inactive GDP-bound form. Plays an important role in the phototransduction cascade by regulating the lifetime and effective concentration of activated transducin alpha. May regulate extra and intracellular mitogenic signals. This Rattus norvegicus (Rat) protein is Regulator of G-protein signaling 16 (Rgs16).